The following is a 468-amino-acid chain: TFIIA-alpha and beta-like factor (468 aa).

Disordered stretches follow at residues 215–236 (DRRLLPGNELRPQESSPYLSLP) and 379–416 (DSVSNEDSTANSSDNEDHQINAPEEDPLNSGDDVSEQD). Over residues 380-391 (SVSNEDSTANSS) the composition is skewed to polar residues. Acidic residues predominate over residues 401–416 (PEEDPLNSGDDVSEQD).

It belongs to the TFIIA subunit 1 family. In terms of tissue distribution, testis specific. Expressed in pachytene spermatocytes and haploid spermatids.

The protein resides in the nucleus. May function as a testis specific transcription factor. Binds DNA in conjunction with GTF2A2 and TBP (the TATA-binding protein) and together with GTF2A2, allows mRNA transcription. This Mus musculus (Mouse) protein is TFIIA-alpha and beta-like factor (Gtf2a1l).